A 264-amino-acid polypeptide reads, in one-letter code: Cyclin-P1-1 (264 aa).

The disordered stretch occupies residues 1 to 25 (MDAAAAAGGEMSRQKATASAPPPPE).

It belongs to the cyclin family. Cyclin U/P subfamily.

The sequence is that of Cyclin-P1-1 (CYCP1-1) from Oryza sativa subsp. japonica (Rice).